The sequence spans 303 residues: Probable cell division protein WhiA (303 aa).

The H-T-H motif DNA-binding region spans 272-303 (SLQQIADSLDFAITKSGVNHRLRKINKLAEDL).

It belongs to the WhiA family.

Involved in cell division and chromosome segregation. This Streptococcus equi subsp. zooepidemicus (strain MGCS10565) protein is Probable cell division protein WhiA.